A 122-amino-acid polypeptide reads, in one-letter code: Large ribosomal subunit protein uL14 (122 aa).

The protein belongs to the universal ribosomal protein uL14 family. Part of the 50S ribosomal subunit. Forms a cluster with proteins L3 and L19. In the 70S ribosome, L14 and L19 interact and together make contacts with the 16S rRNA in bridges B5 and B8.

Functionally, binds to 23S rRNA. Forms part of two intersubunit bridges in the 70S ribosome. The chain is Large ribosomal subunit protein uL14 from Trichlorobacter lovleyi (strain ATCC BAA-1151 / DSM 17278 / SZ) (Geobacter lovleyi).